Reading from the N-terminus, the 108-residue chain is Cytochrome c (108 aa).

4 residues coordinate heme c: C19, C22, H23, and M85.

Belongs to the cytochrome c family. Post-translationally, binds 1 heme c group covalently per subunit.

Its subcellular location is the mitochondrion intermembrane space. In terms of biological role, electron carrier protein. The oxidized form of the cytochrome c heme group can accept an electron from the heme group of the cytochrome c1 subunit of cytochrome reductase. Cytochrome c then transfers this electron to the cytochrome oxidase complex, the final protein carrier in the mitochondrial electron-transport chain. The chain is Cytochrome c from Stellaria longipes (Longstalk starwort).